Here is a 113-residue protein sequence, read N- to C-terminus: Dolichyl-diphosphooligosaccharide--protein glycosyltransferase subunit dad-1 (113 aa).

Residues 1-32 (MAAQVVPVLSKLFDDYQKTTSSKLKIIDAYMT) lie on the Cytoplasmic side of the membrane. Residues 33 to 53 (YILFTGIFQFIYCLLVGTFPF) traverse the membrane as a helical segment. Over 54–55 (NS) the chain is Lumenal. A helical transmembrane segment spans residues 56–78 (FLSGFISTVTSFVLASCLRMQVN). The Cytoplasmic portion of the chain corresponds to 79-92 (QENRSEFTAVSTER). Residues 93-113 (AFADFIFANLILHLVVVNFLG) traverse the membrane as a helical segment.

The protein belongs to the DAD/OST2 family. Component of the oligosaccharyltransferase (OST) complex.

The protein resides in the endoplasmic reticulum membrane. It participates in protein modification; protein glycosylation. Functionally, subunit of the oligosaccharyl transferase (OST) complex that catalyzes the initial transfer of a defined glycan (Glc(3)Man(9)GlcNAc(2) in eukaryotes) from the lipid carrier dolichol-pyrophosphate to an asparagine residue within an Asn-X-Ser/Thr consensus motif in nascent polypeptide chains, the first step in protein N-glycosylation. N-glycosylation occurs cotranslationally and the complex associates with the Sec61 complex at the channel-forming translocon complex that mediates protein translocation across the endoplasmic reticulum (ER). All subunits are required for a maximal enzyme activity. Possesses cell death-inhibiting activity. Suppresses some programmed cell death in C.elegans. The polypeptide is Dolichyl-diphosphooligosaccharide--protein glycosyltransferase subunit dad-1 (Caenorhabditis elegans).